The primary structure comprises 819 residues: Protein SCARECROW (819 aa).

Disordered regions lie at residues L6 to R49, H65 to N136, S212 to T231, and P393 to T420. The segment covering T15 to T33 has biased composition (low complexity). Polar residues predominate over residues R79–V98. Low complexity predominate over residues T99 to N136. The stretch at T418 to L448 forms a coiled coil. In terms of domain architecture, GRAS spans K438 to R806. Positions L445 to Y507 are leucine repeat I (LRI). A LxCxE motif motif is present at residues L452 to E456. The segment at F526–G591 is VHIID. Positions V557–D561 match the VHIID motif. Residues A601–K633 are leucine repeat II (LRII). The segment at V642–N729 is PFYRE. Positions A732–R806 are SAW.

It belongs to the GRAS family. Expressed in shoot apical meristem, leaf primordia, between the cortex and the differentiating vessels in lower shoots and in root endodermis.

Its subcellular location is the nucleus. In terms of biological role, putative transcription factor involved in asymmetric cell division. The sequence is that of Protein SCARECROW (SCR) from Pisum sativum (Garden pea).